The sequence spans 135 residues: Transcription antitermination protein NusB (135 aa).

Belongs to the NusB family.

Involved in transcription antitermination. Required for transcription of ribosomal RNA (rRNA) genes. Binds specifically to the boxA antiterminator sequence of the ribosomal RNA (rrn) operons. This chain is Transcription antitermination protein NusB, found in Clostridium perfringens (strain SM101 / Type A).